The primary structure comprises 163 residues: Nucleotide-binding protein CKO_02735 (163 aa).

Belongs to the YajQ family.

Nucleotide-binding protein. This is Nucleotide-binding protein CKO_02735 from Citrobacter koseri (strain ATCC BAA-895 / CDC 4225-83 / SGSC4696).